The sequence spans 337 residues: Glyceraldehyde-3-phosphate dehydrogenase (337 aa).

NAD(+)-binding positions include 12–13 (RI), Asp34, Arg78, and Thr121. D-glyceraldehyde 3-phosphate-binding positions include 151–153 (SCT), Thr182, Arg199, 212–213 (SG), and Arg235. Cys152 functions as the Nucleophile in the catalytic mechanism. Asn317 provides a ligand contact to NAD(+).

The protein belongs to the glyceraldehyde-3-phosphate dehydrogenase family. In terms of assembly, homotetramer.

It is found in the cytoplasm. It catalyses the reaction D-glyceraldehyde 3-phosphate + phosphate + NAD(+) = (2R)-3-phospho-glyceroyl phosphate + NADH + H(+). It functions in the pathway carbohydrate degradation; glycolysis; pyruvate from D-glyceraldehyde 3-phosphate: step 1/5. Catalyzes the oxidative phosphorylation of glyceraldehyde 3-phosphate (G3P) to 1,3-bisphosphoglycerate (BPG) using the cofactor NAD. The first reaction step involves the formation of a hemiacetal intermediate between G3P and a cysteine residue, and this hemiacetal intermediate is then oxidized to a thioester, with concomitant reduction of NAD to NADH. The reduced NADH is then exchanged with the second NAD, and the thioester is attacked by a nucleophilic inorganic phosphate to produce BPG. The protein is Glyceraldehyde-3-phosphate dehydrogenase (gap) of Lactococcus lactis subsp. lactis (strain IL1403) (Streptococcus lactis).